The following is a 268-amino-acid chain: Tryptophan synthase alpha chain (268 aa).

Active-site proton acceptor residues include Glu49 and Asp60.

It belongs to the TrpA family. As to quaternary structure, tetramer of two alpha and two beta chains.

The enzyme catalyses (1S,2R)-1-C-(indol-3-yl)glycerol 3-phosphate + L-serine = D-glyceraldehyde 3-phosphate + L-tryptophan + H2O. The protein operates within amino-acid biosynthesis; L-tryptophan biosynthesis; L-tryptophan from chorismate: step 5/5. Its function is as follows. The alpha subunit is responsible for the aldol cleavage of indoleglycerol phosphate to indole and glyceraldehyde 3-phosphate. In Yersinia pestis bv. Antiqua (strain Antiqua), this protein is Tryptophan synthase alpha chain.